Reading from the N-terminus, the 134-residue chain is Small ribosomal subunit protein uS9 (134 aa).

The tract at residues 114 to 134 is disordered; sequence EVERKKYGLKKARRAPQFSKR. Residues 120 to 134 show a composition bias toward basic residues; sequence YGLKKARRAPQFSKR.

Belongs to the universal ribosomal protein uS9 family.

The protein is Small ribosomal subunit protein uS9 of Thermotoga neapolitana (strain ATCC 49049 / DSM 4359 / NBRC 107923 / NS-E).